The following is a 204-amino-acid chain: Small ribosomal subunit protein uS4 (204 aa).

The S4 RNA-binding domain occupies 94–157 (RRLDNVVYRL…KKLEVFKENL (64 aa)).

Belongs to the universal ribosomal protein uS4 family. Part of the 30S ribosomal subunit. Contacts protein S5. The interaction surface between S4 and S5 is involved in control of translational fidelity.

Its function is as follows. One of the primary rRNA binding proteins, it binds directly to 16S rRNA where it nucleates assembly of the body of the 30S subunit. Functionally, with S5 and S12 plays an important role in translational accuracy. This is Small ribosomal subunit protein uS4 from Sulfurihydrogenibium sp. (strain YO3AOP1).